The chain runs to 366 residues: Chorismate synthase (366 aa).

2 residues coordinate NADP(+): arginine 48 and arginine 54. FMN is bound by residues 125 to 127 (RSS), 238 to 239 (NA), glycine 278, 293 to 297 (KPTSS), and arginine 319.

The protein belongs to the chorismate synthase family. Homotetramer. FMNH2 is required as a cofactor.

It catalyses the reaction 5-O-(1-carboxyvinyl)-3-phosphoshikimate = chorismate + phosphate. It participates in metabolic intermediate biosynthesis; chorismate biosynthesis; chorismate from D-erythrose 4-phosphate and phosphoenolpyruvate: step 7/7. Functionally, catalyzes the anti-1,4-elimination of the C-3 phosphate and the C-6 proR hydrogen from 5-enolpyruvylshikimate-3-phosphate (EPSP) to yield chorismate, which is the branch point compound that serves as the starting substrate for the three terminal pathways of aromatic amino acid biosynthesis. This reaction introduces a second double bond into the aromatic ring system. This chain is Chorismate synthase, found in Herminiimonas arsenicoxydans.